We begin with the raw amino-acid sequence, 256 residues long: Ribonuclease 3 (256 aa).

The region spanning 3–125 is the RNase III domain; it reads LDALQQRLGY…IVGAVFLDAG (123 aa). E38 is a binding site for Mg(2+). D42 is an active-site residue. Positions 111 and 114 each coordinate Mg(2+). Residue E114 is part of the active site. The DRBM domain occupies 152 to 222; sequence DAKTLLQEYL…AKLALDEVQK (71 aa). The segment at 230-256 is disordered; it reads RSRAERTGKTRKQPVPQDPQLSLRLKE.

Belongs to the ribonuclease III family. In terms of assembly, homodimer. It depends on Mg(2+) as a cofactor.

The protein resides in the cytoplasm. It carries out the reaction Endonucleolytic cleavage to 5'-phosphomonoester.. Its function is as follows. Digests double-stranded RNA. Involved in the processing of primary rRNA transcript to yield the immediate precursors to the large and small rRNAs (23S and 16S). Processes some mRNAs, and tRNAs when they are encoded in the rRNA operon. Processes pre-crRNA and tracrRNA of type II CRISPR loci if present in the organism. The polypeptide is Ribonuclease 3 (Cupriavidus necator (strain ATCC 17699 / DSM 428 / KCTC 22496 / NCIMB 10442 / H16 / Stanier 337) (Ralstonia eutropha)).